The following is a 113-amino-acid chain: Tachykinin-4 (113 aa).

The first 20 residues, 1 to 20 (MLPCLALLLLMELSVCTVAG), serve as a signal peptide directing secretion. Met67 is modified (methionine amide). Residues 71–79 (VGGRPLIQP) constitute a propeptide that is removed on maturation. At Leu95 the chain carries Leucine amide. Residues 98-113 (RSLFTEGREDEAQGSE) constitute a propeptide that is removed on maturation.

The protein belongs to the tachykinin family. As to expression, expressed at low levels in the uterus of both pregnant and non-pregnant women. Isoform 1 is found only in the adrenal gland and fetal liver. Isoform 2 is found in heart, liver, bone marrow, prostate, adrenal gland and testis. Isoform 3 and isoform 4 are expressed predominantly in adrenal gland and placenta.

Its subcellular location is the secreted. Its function is as follows. Tachykinins are active peptides which excite neurons, evoke behavioral responses, are potent vasodilators and secretagogues, and contract (directly or indirectly) many smooth muscles. Endokinin-A induces thermal hyperalgesia and pain-related behavior such as scratching following intrathecal administration in rats. These effects are suppressed by treatment with endokinin-C. Endokinin-A/B reduces arterial blood pressure and increases sperm motility. The protein is Tachykinin-4 of Homo sapiens (Human).